We begin with the raw amino-acid sequence, 96 residues long: Large ribosomal subunit protein uL23 (96 aa).

Belongs to the universal ribosomal protein uL23 family. As to quaternary structure, part of the 50S ribosomal subunit. Contacts protein L29, and trigger factor when it is bound to the ribosome.

Functionally, one of the early assembly proteins it binds 23S rRNA. One of the proteins that surrounds the polypeptide exit tunnel on the outside of the ribosome. Forms the main docking site for trigger factor binding to the ribosome. The protein is Large ribosomal subunit protein uL23 of Bacillus cytotoxicus (strain DSM 22905 / CIP 110041 / 391-98 / NVH 391-98).